Reading from the N-terminus, the 360-residue chain is S-adenosylmethionine:tRNA ribosyltransferase-isomerase (360 aa).

It belongs to the QueA family. Monomer.

It is found in the cytoplasm. The enzyme catalyses 7-aminomethyl-7-carbaguanosine(34) in tRNA + S-adenosyl-L-methionine = epoxyqueuosine(34) in tRNA + adenine + L-methionine + 2 H(+). The protein operates within tRNA modification; tRNA-queuosine biosynthesis. Its function is as follows. Transfers and isomerizes the ribose moiety from AdoMet to the 7-aminomethyl group of 7-deazaguanine (preQ1-tRNA) to give epoxyqueuosine (oQ-tRNA). The chain is S-adenosylmethionine:tRNA ribosyltransferase-isomerase from Rhizobium rhizogenes (strain K84 / ATCC BAA-868) (Agrobacterium radiobacter).